Consider the following 464-residue polypeptide: Protein FAM90A26 (464 aa).

Disordered regions lie at residues 1 to 42, 70 to 293, 312 to 390, and 410 to 442; these read MMAC…DPRL, PPTL…AKRP, PFQI…DGAQ, and AAPS…VRVP. 2 stretches are compositionally biased toward basic and acidic residues: residues 74-83 and 97-114; these read GKKEGKENLK and NKDK…DPQR. The segment covering 178-197 has biased composition (low complexity); sequence SALASLSPLRKASLSSSSSL.

This sequence belongs to the FAM90 family.

The chain is Protein FAM90A26 from Homo sapiens (Human).